Consider the following 787-residue polypeptide: Penicillin-binding protein 1A (787 aa).

Over 1 to 6 (MYKSLF) the chain is Cytoplasmic. The chain crosses the membrane as a helical; Signal-anchor for type II membrane protein span at residues 7 to 27 (LCLKIFAVLILIGCSVTAYII). Topologically, residues 28-787 (YHYSHDLPDY…GMLDQSQEIY (760 aa)) are periplasmic. The tract at residues 49–220 (TRIYSRDGKL…SELNPDKNYS (172 aa)) is transglycosylase. Catalysis depends on glutamate 87, which acts as the Proton donor; for transglycosylase activity. A transpeptidase region spans residues 398–711 (DVIVVEPIKD…SNVVLPIFID (314 aa)). The Acyl-ester intermediate; for transpeptidase activity role is filled by serine 457.

The protein in the N-terminal section; belongs to the glycosyltransferase 51 family. It in the C-terminal section; belongs to the transpeptidase family.

It is found in the cell inner membrane. The catalysed reaction is [GlcNAc-(1-&gt;4)-Mur2Ac(oyl-L-Ala-gamma-D-Glu-L-Lys-D-Ala-D-Ala)](n)-di-trans,octa-cis-undecaprenyl diphosphate + beta-D-GlcNAc-(1-&gt;4)-Mur2Ac(oyl-L-Ala-gamma-D-Glu-L-Lys-D-Ala-D-Ala)-di-trans,octa-cis-undecaprenyl diphosphate = [GlcNAc-(1-&gt;4)-Mur2Ac(oyl-L-Ala-gamma-D-Glu-L-Lys-D-Ala-D-Ala)](n+1)-di-trans,octa-cis-undecaprenyl diphosphate + di-trans,octa-cis-undecaprenyl diphosphate + H(+). It catalyses the reaction Preferential cleavage: (Ac)2-L-Lys-D-Ala-|-D-Ala. Also transpeptidation of peptidyl-alanyl moieties that are N-acyl substituents of D-alanine.. Its pathway is cell wall biogenesis; peptidoglycan biosynthesis. Cell wall formation. Synthesis of cross-linked peptidoglycan from the lipid intermediates. The enzyme has a penicillin-insensitive transglycosylase N-terminal domain (formation of linear glycan strands) and a penicillin-sensitive transpeptidase C-terminal domain (cross-linking of the peptide subunits). The sequence is that of Penicillin-binding protein 1A (mrcA) from Rickettsia prowazekii (strain Madrid E).